A 140-amino-acid chain; its full sequence is ATP synthase epsilon chain (140 aa).

The protein belongs to the ATPase epsilon chain family. As to quaternary structure, F-type ATPases have 2 components, CF(1) - the catalytic core - and CF(0) - the membrane proton channel. CF(1) has five subunits: alpha(3), beta(3), gamma(1), delta(1), epsilon(1). CF(0) has three main subunits: a, b and c.

It localises to the cell inner membrane. In terms of biological role, produces ATP from ADP in the presence of a proton gradient across the membrane. The chain is ATP synthase epsilon chain from Vibrio vulnificus (strain CMCP6).